A 607-amino-acid chain; its full sequence is UvrABC system protein C (607 aa).

A GIY-YIG domain is found at 15-93 (SEPGVYCMLD…IKKYQPRYNI (79 aa)). A UVR domain is found at 202–237 (HEVIADLIKKMEAASQQLNFELAAKVRDQIMLLRKM).

This sequence belongs to the UvrC family. In terms of assembly, interacts with UvrB in an incision complex.

The protein localises to the cytoplasm. Its function is as follows. The UvrABC repair system catalyzes the recognition and processing of DNA lesions. UvrC both incises the 5' and 3' sides of the lesion. The N-terminal half is responsible for the 3' incision and the C-terminal half is responsible for the 5' incision. In Pseudoalteromonas translucida (strain TAC 125), this protein is UvrABC system protein C.